The chain runs to 376 residues: Lateral eye opsin (376 aa).

The Extracellular segment spans residues 1–46 (MANQLSYSSLGWPYQPNASVVDTMPKEMLYMIHEHWYAFPPMNPLW). Asn-17 carries an N-linked (GlcNAc...) asparagine glycan. The chain crosses the membrane as a helical span at residues 47–71 (YSILGVAMIILGIICVLGNGMVIYL). Residues 72-83 (MMTTKSLRTPTN) lie on the Cytoplasmic side of the membrane. A helical membrane pass occupies residues 84-108 (LLVVNLAFSDFCMMAFMMPTMTSNC). Topologically, residues 109 to 123 (FAETWILGPFMCEVY) are extracellular. A disulfide bond links Cys-120 and Cys-197. Residues 124–143 (GMAGSLFGCASIWSMVMITL) form a helical membrane-spanning segment. At 144-162 (DRYNVIVRGMAAAPLTHKK) the chain is on the cytoplasmic side. The helical transmembrane segment at 163–186 (ATLLLLFVWIWSGGWTILPFFGWS) threads the bilayer. The Extracellular portion of the chain corresponds to 187-210 (RYVPEGNLTSCTVDYLTKDWSSAS). Asn-193 carries an N-linked (GlcNAc...) asparagine glycan. A helical transmembrane segment spans residues 211-238 (YVVIYGLAVYFLPLITMIYCYFFIVHAV). Topologically, residues 239 to 274 (AEHEKQLREQAKKMNVASLRANADQQKQSAECRLAK) are cytoplasmic. The chain crosses the membrane as a helical span at residues 275–298 (VAMMTVGLWFMAWTPYLIISWAGV). Residues 299 to 306 (FSSGTRLT) lie on the Extracellular side of the membrane. A helical membrane pass occupies residues 307-331 (PLATIWGSVFAKANSCYNPIVYGIS). Lys-318 is modified (N6-(retinylidene)lysine). At 332–376 (HPRYKAALYQRFPSLACGSGESGSDVKSEASATTTMEEKPKIPEA) the chain is on the cytoplasmic side. Positions 349 to 376 (GSGESGSDVKSEASATTTMEEKPKIPEA) are disordered. A compositionally biased stretch (basic and acidic residues) spans 367 to 376 (MEEKPKIPEA).

This sequence belongs to the G-protein coupled receptor 1 family. Opsin subfamily. In terms of processing, phosphorylated on some or all of the serine and threonine residues present in the C-terminal region. In terms of tissue distribution, lateral eye.

The protein localises to the membrane. Functionally, visual pigments are the light-absorbing molecules that mediate vision. They consist of an apoprotein, opsin, covalently linked to cis-retinal. This chain is Lateral eye opsin, found in Limulus polyphemus (Atlantic horseshoe crab).